Reading from the N-terminus, the 389-residue chain is Phospho-N-acetylmuramoyl-pentapeptide-transferase (389 aa).

The next 10 membrane-spanning stretches (helical) occupy residues 21-41, 70-90, 97-117, 134-154, 189-209, 222-242, 259-279, 286-306, 311-331, and 366-386; these read FITF…LVTG, GTPT…TLLW, FIWV…VDDY, YMWQ…SVSA, TISY…VIVG, GLAI…AYLT, AGEL…FLWF, VFMG…IAVI, VVLF…MLQV, and QVVV…LSTL.

The protein belongs to the glycosyltransferase 4 family. MraY subfamily. Mg(2+) serves as cofactor.

It localises to the cell inner membrane. It carries out the reaction UDP-N-acetyl-alpha-D-muramoyl-L-alanyl-gamma-D-glutamyl-meso-2,6-diaminopimeloyl-D-alanyl-D-alanine + di-trans,octa-cis-undecaprenyl phosphate = di-trans,octa-cis-undecaprenyl diphospho-N-acetyl-alpha-D-muramoyl-L-alanyl-D-glutamyl-meso-2,6-diaminopimeloyl-D-alanyl-D-alanine + UMP. It participates in cell wall biogenesis; peptidoglycan biosynthesis. Functionally, catalyzes the initial step of the lipid cycle reactions in the biosynthesis of the cell wall peptidoglycan: transfers peptidoglycan precursor phospho-MurNAc-pentapeptide from UDP-MurNAc-pentapeptide onto the lipid carrier undecaprenyl phosphate, yielding undecaprenyl-pyrophosphoryl-MurNAc-pentapeptide, known as lipid I. The polypeptide is Phospho-N-acetylmuramoyl-pentapeptide-transferase (Janthinobacterium sp. (strain Marseille) (Minibacterium massiliensis)).